The chain runs to 341 residues: D-aspartate oxidase (341 aa).

FAD-binding residues include aspartate 36, lysine 37, threonine 43, serine 44, methionine 50, glycine 307, isoleucine 311, and serine 312. The Microbody targeting signal motif lies at 339 to 341; the sequence is SNL.

The protein belongs to the DAMOX/DASOX family. As to quaternary structure, monomer. Interacts with PEX5; the interaction is direct and required for localization of DDO to the peroxisome. Interacts with DAOA; the interaction is direct and increases the degradation rate of DDO. Requires FAD as cofactor. Post-translationally, may be S-nitrosylated. Expressed in epithelial cells of the proximal nephron tubules in the renal cortex (at protein level). In the brain, expressed in the frontal, temporal, and occipital lobes of the cortex, hippocampus, striatum, diencephalon, brainstem, cerebellum, spinal cord, plexus choroiderus and ependyma (at protein level). Expression is increased in the prefrontal cortex of schizophrenic patients. Levels are normal in the superior frontal gyrus of patients with Alzheimer's disease.

The protein localises to the peroxisome matrix. It is found in the cytoplasm. The protein resides in the cytosol. It carries out the reaction D-aspartate + O2 + H2O = oxaloacetate + H2O2 + NH4(+). The catalysed reaction is D-glutamate + O2 + H2O = H2O2 + 2-oxoglutarate + NH4(+). Inhibited by the benzodiazepine olanzapine. Inhibited by aminooxyacetic acid, thiolactomycin, malonate and meso-tartrate. Clozapine, haloperidol and chlorpromazine have no effect on activity. Not inhibited by sodium, potassium, magnesium, iron, calcium, cobalt, copper, nickel, manganese or zinc ions. Not inhibited by AMP, ADP, ATP, or cAMP. Not inhibited by pyridoxal 5'-phosphate. Functionally, selectively catalyzes the oxidative deamination of acidic amino acids. Suppresses the level of D-aspartate in the brain, an amino acid that can act as an agonist for glutamate receptors. Protects the organism from the toxicity of D-amino acids. May also function in the intestine. The polypeptide is D-aspartate oxidase (DDO) (Homo sapiens (Human)).